A 246-amino-acid chain; its full sequence is Small ribosomal subunit protein uS2 (246 aa).

This sequence belongs to the universal ribosomal protein uS2 family.

The sequence is that of Small ribosomal subunit protein uS2 from Dictyoglomus thermophilum (strain ATCC 35947 / DSM 3960 / H-6-12).